The chain runs to 142 residues: Putative pre-16S rRNA nuclease (142 aa).

This sequence belongs to the YqgF nuclease family.

It localises to the cytoplasm. Its function is as follows. Could be a nuclease involved in processing of the 5'-end of pre-16S rRNA. The chain is Putative pre-16S rRNA nuclease from Ruminiclostridium cellulolyticum (strain ATCC 35319 / DSM 5812 / JCM 6584 / H10) (Clostridium cellulolyticum).